We begin with the raw amino-acid sequence, 201 residues long: 3-isopropylmalate dehydratase small subunit (201 aa).

The protein belongs to the LeuD family. LeuD type 1 subfamily. In terms of assembly, heterodimer of LeuC and LeuD.

It catalyses the reaction (2R,3S)-3-isopropylmalate = (2S)-2-isopropylmalate. The protein operates within amino-acid biosynthesis; L-leucine biosynthesis; L-leucine from 3-methyl-2-oxobutanoate: step 2/4. Catalyzes the isomerization between 2-isopropylmalate and 3-isopropylmalate, via the formation of 2-isopropylmaleate. The chain is 3-isopropylmalate dehydratase small subunit from Chloroflexus aurantiacus (strain ATCC 29366 / DSM 635 / J-10-fl).